Reading from the N-terminus, the 799-residue chain is Zinc finger X-chromosomal protein (799 aa).

Position 269 is a phosphoserine (serine 269). 13 consecutive C2H2-type zinc fingers follow at residues 419 to 444 (YPCMICGKKFKSRGFLKRHMKNHPEH), 450 to 472 (YRCTDCDYTTNKKISLHNHLESH), 482 to 504 (IECDECGKHFSHAGALFTHKMVH), 513 to 536 (HKCKFCEYETAEQGLLNRHLLAVH), 542 to 564 (HICVECGKGFRHPSELKKHMRIH), 570 to 593 (YECQYCEYRSADSSNLKTHVKTKH), 599 to 621 (FKCDICLLTFSDTKEVQQHALVH), 627 to 650 (HQCLHCDHKSSNSSDLKRHIISVH), 656 to 678 (HKCDMCDKGFHRPSELKKHVAAH), 684 to 707 (HQCRHCDFKIADPFVLSRHILSVH), 713 to 735 (FRCKRCRKGFRQQSELKKHMKTH), 741 to 764 (YQCEYCEYSTTDASGFKRHVISIH), and 770 to 792 (HRCEYCKKGFRRPSEKNQHIMRH).

It belongs to the krueppel C2H2-type zinc-finger protein family. ZFX/ZFY subfamily.

It is found in the nucleus. In terms of biological role, probable transcriptional activator. This chain is Zinc finger X-chromosomal protein (Zfx), found in Mus musculus (Mouse).